The following is a 74-amino-acid chain: Protein kish-B (74 aa).

An N-terminal signal peptide occupies residues 1–22 (MTNVYSFDGILVFGLLFICTCA). Residues 23-52 (YLKKVPRLNSWLLSEKKGVWGVFYKAAVIG) are Extracellular-facing. The chain crosses the membrane as a helical span at residues 53–73 (TRLHVVVAASCLCMAFYLIFL). Residue lysine 74 is a topological domain, cytoplasmic.

The protein belongs to the KISH family.

It localises to the golgi apparatus membrane. Functionally, involved in the early part of the secretory pathway. The chain is Protein kish-B (tmem167b) from Danio rerio (Zebrafish).